The sequence spans 147 residues: Endoribonuclease YbeY (147 aa).

Zn(2+) is bound by residues histidine 109, histidine 113, and histidine 119.

The protein belongs to the endoribonuclease YbeY family. It depends on Zn(2+) as a cofactor.

It is found in the cytoplasm. Its function is as follows. Single strand-specific metallo-endoribonuclease involved in late-stage 70S ribosome quality control and in maturation of the 3' terminus of the 16S rRNA. The protein is Endoribonuclease YbeY of Thiobacillus denitrificans (strain ATCC 25259 / T1).